A 344-amino-acid polypeptide reads, in one-letter code: Histone-lysine N-methyltransferase, H3 lysine-9 specific KMT1 (344 aa).

In terms of domain architecture, Pre-SET spans 79–174; it reads SGCSCAKDSE…DCPNRVVERG (96 aa). The Zn(2+) site is built by Cys-81, Cys-83, Cys-89, Cys-94, Cys-96, Cys-156, Cys-160, Cys-162, Cys-166, and Cys-272. Residues 177-312 form the SET domain; the sequence is IPLEIFRTPD…EGEELTFDYV (136 aa). Tyr-311 provides a ligand contact to S-adenosyl-L-methionine. The Post-SET domain maps to 328–344; it reads HMTRCLCGSKKCRKFLW. Zn(2+) is bound by residues Cys-332, Cys-334, and Cys-339.

Belongs to the class V-like SAM-binding methyltransferase superfamily.

It is found in the chromosome. The enzyme catalyses L-lysyl(9)-[histone H3] + 3 S-adenosyl-L-methionine = N(6),N(6),N(6)-trimethyl-L-lysyl(9)-[histone H3] + 3 S-adenosyl-L-homocysteine + 3 H(+). In terms of biological role, histone methyltransferase that specifically trimethylates histone H3 to form H3K9me3. H3K9me3 marks chromatin regions for DNA methylation. Plays a key role in the regulation of the biosynthesis of the gamma-pyrones fusapyrone (FPY) and deoxyfusapyrone (dFPY). This is Histone-lysine N-methyltransferase, H3 lysine-9 specific KMT1 from Fusarium mangiferae (Mango malformation disease fungus).